A 156-amino-acid chain; its full sequence is Transcription elongation factor GreA (156 aa).

Positions glutamate 2–arginine 27 form a coiled coil.

Belongs to the GreA/GreB family.

Functionally, necessary for efficient RNA polymerase transcription elongation past template-encoded arresting sites. The arresting sites in DNA have the property of trapping a certain fraction of elongating RNA polymerases that pass through, resulting in locked ternary complexes. Cleavage of the nascent transcript by cleavage factors such as GreA or GreB allows the resumption of elongation from the new 3'terminus. GreA releases sequences of 2 to 3 nucleotides. This Lactococcus lactis subsp. cremoris (strain SK11) protein is Transcription elongation factor GreA.